Reading from the N-terminus, the 542-residue chain is Chaperonin GroEL 2 (542 aa).

ATP-binding positions include 30–33 (TLGP), Lys-51, 87–91 (DGTTT), Gly-415, and Asp-496. The segment at 523 to 542 (AEKPKKDGQPQMPPAPGMDF) is disordered. Over residues 533-542 (QMPPAPGMDF) the composition is skewed to pro residues.

This sequence belongs to the chaperonin (HSP60) family. As to quaternary structure, forms a cylinder of 14 subunits composed of two heptameric rings stacked back-to-back. Interacts with the co-chaperonin GroES.

It localises to the cytoplasm. It carries out the reaction ATP + H2O + a folded polypeptide = ADP + phosphate + an unfolded polypeptide.. Functionally, together with its co-chaperonin GroES, plays an essential role in assisting protein folding. The GroEL-GroES system forms a nano-cage that allows encapsulation of the non-native substrate proteins and provides a physical environment optimized to promote and accelerate protein folding. This Sinorhizobium medicae (strain WSM419) (Ensifer medicae) protein is Chaperonin GroEL 2.